A 194-amino-acid chain; its full sequence is GTP cyclohydrolase 1 (194 aa).

Positions 83, 86, and 155 each coordinate Zn(2+).

The protein belongs to the GTP cyclohydrolase I family. As to quaternary structure, homomer.

It carries out the reaction GTP + H2O = 7,8-dihydroneopterin 3'-triphosphate + formate + H(+). Its pathway is cofactor biosynthesis; 7,8-dihydroneopterin triphosphate biosynthesis; 7,8-dihydroneopterin triphosphate from GTP: step 1/1. This Streptococcus pyogenes serotype M49 (strain NZ131) protein is GTP cyclohydrolase 1.